The following is a 267-amino-acid chain: Electron transfer flavoprotein subunit beta (267 aa).

This sequence belongs to the ETF beta-subunit/FixA family. As to quaternary structure, heterodimer of an alpha and a beta subunit.

In terms of biological role, participates in the electron transfer process during N,N-dimethylglycine (DMG) degradation to sarcosine. In Chromohalobacter salexigens (strain ATCC BAA-138 / DSM 3043 / CIP 106854 / NCIMB 13768 / 1H11), this protein is Electron transfer flavoprotein subunit beta.